A 299-amino-acid polypeptide reads, in one-letter code: Ectoine dioxygenase (299 aa).

A disordered region spans residues 1–40 (MTTTTTNVTDLYPTRGATEVATPRQDPVVWGSPDAPGPVS). Gln133 contributes to the L-ectoine binding site. Lys139 serves as a coordination point for 2-oxoglutarate. The Fe cation site is built by His150, Asp152, and His251.

Belongs to the PhyH family. EctD subfamily. As to quaternary structure, homodimer. Fe(2+) serves as cofactor.

It catalyses the reaction L-ectoine + 2-oxoglutarate + O2 = 5-hydroxyectoine + succinate + CO2. Functionally, involved in the biosynthesis of 5-hydroxyectoine, called compatible solute, which helps organisms to survive extreme osmotic stress by acting as a highly soluble organic osmolyte. Catalyzes the 2-oxoglutarate-dependent selective hydroxylation of L-ectoine to yield (4S,5S)-5-hydroxyectoine. This Streptomyces coelicolor (strain ATCC BAA-471 / A3(2) / M145) protein is Ectoine dioxygenase.